Here is a 55-residue protein sequence, read N- to C-terminus: Large ribosomal subunit protein bL33 (55 aa).

The protein belongs to the bacterial ribosomal protein bL33 family.

The protein is Large ribosomal subunit protein bL33 of Rhizobium etli (strain CIAT 652).